Here is a 150-residue protein sequence, read N- to C-terminus: MAKRVSLPDVVISAPKAVFKPAKEEALACILPKYYKSMADMSIKTNSVIDKCWFCNQDLVFRPISIETFKGGEVGYFCSKICRDSLASMVKSHVALREEPKISLLPLVFYEDKEKVINTINLLRDKDGVYGSCYFKENSQIIDISLRSLL.

Belongs to the orthopoxvirus VLTF-2/OPG126 family. In terms of assembly, interacts with the late transcription elongation factor VLTF-4/OPG110. Interacts with the late transcription factors VLTF-1/OPG093.

Acts with RNA polymerase to initiate transcription from late gene promoters. This is Viral late gene transcription factor 2 (OPG126) from Monkeypox virus.